The following is a 577-amino-acid chain: Arginine--tRNA ligase (577 aa).

A 'HIGH' region motif is present at residues 122-132; the sequence is PNVAKEMHVGH.

This sequence belongs to the class-I aminoacyl-tRNA synthetase family. In terms of assembly, monomer.

Its subcellular location is the cytoplasm. The enzyme catalyses tRNA(Arg) + L-arginine + ATP = L-arginyl-tRNA(Arg) + AMP + diphosphate. The chain is Arginine--tRNA ligase from Escherichia coli O6:K15:H31 (strain 536 / UPEC).